We begin with the raw amino-acid sequence, 674 residues long: Membrane-anchored lipid-binding protein LAM5 (674 aa).

Disordered regions lie at residues Met1–Glu52 and Asn65–Leu151. Residues Met1–Met633 lie on the Cytoplasmic side of the membrane. A compositionally biased stretch (basic and acidic residues) spans Ala69–Ser81. The segment covering Arg82–Ser119 has biased composition (low complexity). Phosphothreonine is present on Thr110. Phosphoserine occurs at positions 113 and 140. Phosphothreonine is present on Thr143. Phosphoserine is present on Ser149. Positions Lys198–Thr264 constitute a GRAM domain. Residues Ile336–Asn357 are compositionally biased toward acidic residues. The disordered stretch occupies residues Ile336–Tyr380. A compositionally biased stretch (low complexity) spans Ile358–Ser371. A VASt domain is found at Asn409–Val582. The helical transmembrane segment at Glu634 to Ile654 threads the bilayer. Topologically, residues Arg655–Leu674 are lumenal.

The protein belongs to the YSP2 family.

The protein resides in the endoplasmic reticulum membrane. In terms of biological role, may be involved in sterol transfer between intracellular membranes. In Saccharomyces cerevisiae (strain ATCC 204508 / S288c) (Baker's yeast), this protein is Membrane-anchored lipid-binding protein LAM5.